The chain runs to 340 residues: Heat-inducible transcription repressor HrcA (340 aa).

This sequence belongs to the HrcA family.

Negative regulator of class I heat shock genes (grpE-dnaK-dnaJ and groELS operons). Prevents heat-shock induction of these operons. The polypeptide is Heat-inducible transcription repressor HrcA (Burkholderia mallei (strain NCTC 10247)).